The sequence spans 600 residues: Glutamine--fructose-6-phosphate aminotransferase [isomerizing] (600 aa).

Residue cysteine 2 is the Nucleophile; for GATase activity of the active site. Positions 2–217 (CGIVGYIGQL…DKEMVIVTDD (216 aa)) constitute a Glutamine amidotransferase type-2 domain. SIS domains lie at 283-422 (IAAA…KNGI) and 452-590 (IARE…VDKP). The active-site For Fru-6P isomerization activity is lysine 595.

As to quaternary structure, homodimer.

It is found in the cytoplasm. It catalyses the reaction D-fructose 6-phosphate + L-glutamine = D-glucosamine 6-phosphate + L-glutamate. Catalyzes the first step in hexosamine metabolism, converting fructose-6P into glucosamine-6P using glutamine as a nitrogen source. This is Glutamine--fructose-6-phosphate aminotransferase [isomerizing] (glmS) from Bacillus spizizenii (strain ATCC 23059 / NRRL B-14472 / W23) (Bacillus subtilis subsp. spizizenii).